Here is a 182-residue protein sequence, read N- to C-terminus: Putative lipoprotein LpqE (182 aa).

Positions 1–29 (MNRCNIRLRLAGMTTWVASIALLAAALSG) are cleaved as a signal peptide. C30 carries N-palmitoyl cysteine lipidation. C30 carries the S-diacylglycerol cysteine lipid modification.

It localises to the cell membrane. In Mycobacterium bovis (strain ATCC BAA-935 / AF2122/97), this protein is Putative lipoprotein LpqE (lpqE).